The primary structure comprises 128 residues: Flagellar assembly factor FliW (128 aa).

This sequence belongs to the FliW family. In terms of assembly, interacts with translational regulator CsrA and flagellin(s).

Its subcellular location is the cytoplasm. In terms of biological role, acts as an anti-CsrA protein, binds CsrA and prevents it from repressing translation of its target genes, one of which is flagellin. Binds to flagellin and participates in the assembly of the flagellum. The polypeptide is Flagellar assembly factor FliW (Campylobacter fetus subsp. fetus (strain 82-40)).